The following is a 715-amino-acid chain: Putative membrane protein IgaA homolog (715 aa).

The next 5 helical transmembrane spans lie at 2 to 22, 214 to 234, 235 to 255, 349 to 369, and 663 to 683; these read STIVLILALLLTSLIAVGLLW, EACAICIALLLLFFALSGPTV, TLPWLVIVAVSLTCWACWYLF, NLTLIVGSLLVLVLLLIYVPL, and ATSLLLLVLIFCLVVNMVLLI.

This sequence belongs to the IgaA family.

It localises to the cell inner membrane. This chain is Putative membrane protein IgaA homolog, found in Yersinia pestis.